Consider the following 179-residue polypeptide: Crossover junction endodeoxyribonuclease RuvC (179 aa).

Residues D14, E74, and D147 contribute to the active site. Positions 14, 74, and 147 each coordinate Mg(2+).

The protein belongs to the RuvC family. As to quaternary structure, homodimer which binds Holliday junction (HJ) DNA. The HJ becomes 2-fold symmetrical on binding to RuvC with unstacked arms; it has a different conformation from HJ DNA in complex with RuvA. In the full resolvosome a probable DNA-RuvA(4)-RuvB(12)-RuvC(2) complex forms which resolves the HJ. Mg(2+) serves as cofactor.

It localises to the cytoplasm. It catalyses the reaction Endonucleolytic cleavage at a junction such as a reciprocal single-stranded crossover between two homologous DNA duplexes (Holliday junction).. The RuvA-RuvB-RuvC complex processes Holliday junction (HJ) DNA during genetic recombination and DNA repair. Endonuclease that resolves HJ intermediates. Cleaves cruciform DNA by making single-stranded nicks across the HJ at symmetrical positions within the homologous arms, yielding a 5'-phosphate and a 3'-hydroxyl group; requires a central core of homology in the junction. The consensus cleavage sequence is 5'-(A/T)TT(C/G)-3'. Cleavage occurs on the 3'-side of the TT dinucleotide at the point of strand exchange. HJ branch migration catalyzed by RuvA-RuvB allows RuvC to scan DNA until it finds its consensus sequence, where it cleaves and resolves the cruciform DNA. This chain is Crossover junction endodeoxyribonuclease RuvC, found in Rubrobacter xylanophilus (strain DSM 9941 / JCM 11954 / NBRC 16129 / PRD-1).